The primary structure comprises 401 residues: MKLYEYQAKTVFSEHKIPTPKSILIQKEDTNPEVKSVGFPSVVKAQVLSGGRGKRGLIQLVKNENEALYQVKRLFEIEPSMKHLLIEEAVHIDKEIYVSITVDAPSGKAILIASESGGVEIETLAVEHPELIIKEPIDLRYGLLSHQARHIAYQMNLSVNQTKQMIQILMNIYEIFKKYDAELVEINPLFATKEDTLIAGDGKIMIDDNSVFRQPRFAQTETDYSSEAAYEASLEGIPFIQFDGDIGLMCAGAGLTTTVYDLIHYEGGTVANYLEFGGPNYKKAVKAMEICLKVPSKVILIVTFGTIARADVMAEGIVEAIKKLNPDRPIVTCIRGTNEAHAVELLKEAGLTPLFDTEEAVRTAVRLAKGEKRWVFLSIEKPKCVSKASRVVKEAFGPNIW.

One can recognise an ATP-grasp domain in the interval 9-217 (KTVFSEHKIP…DNSVFRQPRF (209 aa)). Residue 35-96 (KSVGFPSVVK…EEAVHIDKEI (62 aa)) participates in ATP binding. The Mg(2+) site is built by Glu185 and Asn187.

The protein belongs to the succinate/malate CoA ligase beta subunit family. Forms a complex with SqwL. It depends on Mg(2+) as a cofactor.

It carries out the reaction sulfoacetate + ATP + CoA = sulfoacetyl-CoA + ADP + phosphate. Functionally, part of a variant of the sulfo-TK pathway, a D-sulfoquinovose degradation pathway that produces sulfoacetate. Hydrolyzes sulfoacetyl-coenzyme A (sulfoacetyl-CoA) to produce sulfoacetate and CoA coupled with the phosphorylation of ADP to generate ATP. Cannot use succinate, acetate or 3-hydroxypropionate, and shows only residual activities with malonate and 3-sulfopropanoate. The polypeptide is ADP-forming sulfoacetate-CoA ligase subunit SqwK (Acholeplasma sp).